Consider the following 253-residue polypeptide: 5'-nucleotidase SurE (253 aa).

The a divalent metal cation site is built by D8, D9, S40, and N92.

It belongs to the SurE nucleotidase family. A divalent metal cation is required as a cofactor.

The protein resides in the cytoplasm. It catalyses the reaction a ribonucleoside 5'-phosphate + H2O = a ribonucleoside + phosphate. In terms of biological role, nucleotidase that shows phosphatase activity on nucleoside 5'-monophosphates. The chain is 5'-nucleotidase SurE from Hyphomonas neptunium (strain ATCC 15444).